Here is a 334-residue protein sequence, read N- to C-terminus: Aspartate carbamoyltransferase catalytic subunit (334 aa).

Residues Arg-71 and Thr-72 each contribute to the carbamoyl phosphate site. Residue Lys-99 participates in L-aspartate binding. Positions 121, 151, and 154 each coordinate carbamoyl phosphate. Residues Arg-184 and Arg-239 each coordinate L-aspartate. Residues Gly-280 and Pro-281 each coordinate carbamoyl phosphate.

The protein belongs to the aspartate/ornithine carbamoyltransferase superfamily. ATCase family. In terms of assembly, heterododecamer (2C3:3R2) of six catalytic PyrB chains organized as two trimers (C3), and six regulatory PyrI chains organized as three dimers (R2).

The enzyme catalyses carbamoyl phosphate + L-aspartate = N-carbamoyl-L-aspartate + phosphate + H(+). Its pathway is pyrimidine metabolism; UMP biosynthesis via de novo pathway; (S)-dihydroorotate from bicarbonate: step 2/3. In terms of biological role, catalyzes the condensation of carbamoyl phosphate and aspartate to form carbamoyl aspartate and inorganic phosphate, the committed step in the de novo pyrimidine nucleotide biosynthesis pathway. The chain is Aspartate carbamoyltransferase catalytic subunit from Pseudomonas fluorescens (strain ATCC BAA-477 / NRRL B-23932 / Pf-5).